We begin with the raw amino-acid sequence, 143 residues long: Large ribosomal subunit protein uL16c (143 aa).

Belongs to the universal ribosomal protein uL16 family. Part of the 50S ribosomal subunit.

The protein resides in the plastid. The protein localises to the chloroplast. This Spirogyra maxima (Green alga) protein is Large ribosomal subunit protein uL16c.